Reading from the N-terminus, the 147-residue chain is Membrane-spanning 4-domains subfamily A member 6E (147 aa).

At 1-52 the chain is on the cytoplasmic side; sequence MTSQPISNETIIMLPSNVINFSQAEKPEPTNQGQDSLKKRLQAKVKVIGVHS. A helical transmembrane segment spans residues 53–73; the sequence is SLAGSILSALSALVGFILLSV. Topologically, residues 74–120 are extracellular; sequence NPAALNPASLQCKLDEKDIPTRLLLSYDYHSPYTMDCHRAKASLAGT. A helical transmembrane segment spans residues 121 to 141; it reads LSLMLVSTVLEFCLAVLTAVL. Topologically, residues 142 to 147 are cytoplasmic; it reads QWKQTV.

It belongs to the MS4A family. As to expression, expressed by malignant and fetal tissue at very low levels.

The protein localises to the membrane. May be involved in signal transduction as a component of a multimeric receptor complex. This is Membrane-spanning 4-domains subfamily A member 6E (MS4A6E) from Homo sapiens (Human).